The chain runs to 179 residues: Endoribonuclease YbeY (179 aa).

Positions 141, 145, and 151 each coordinate Zn(2+).

It belongs to the endoribonuclease YbeY family. Zn(2+) is required as a cofactor.

The protein resides in the cytoplasm. Functionally, single strand-specific metallo-endoribonuclease involved in late-stage 70S ribosome quality control and in maturation of the 3' terminus of the 16S rRNA. The protein is Endoribonuclease YbeY of Synechocystis sp. (strain ATCC 27184 / PCC 6803 / Kazusa).